The primary structure comprises 707 residues: Polyribonucleotide nucleotidyltransferase (707 aa).

Residues D488 and D494 each contribute to the Mg(2+) site. The KH domain maps to 555–615 (PIIKVTKIDP…ENVDNAIALI (61 aa)). The 68-residue stretch at 625 to 692 (GEILEGKITR…DLGRLQFKRV (68 aa)) folds into the S1 motif domain.

This sequence belongs to the polyribonucleotide nucleotidyltransferase family. It depends on Mg(2+) as a cofactor.

Its subcellular location is the cytoplasm. It catalyses the reaction RNA(n+1) + phosphate = RNA(n) + a ribonucleoside 5'-diphosphate. Involved in mRNA degradation. Catalyzes the phosphorolysis of single-stranded polyribonucleotides processively in the 3'- to 5'-direction. The sequence is that of Polyribonucleotide nucleotidyltransferase from Thermotoga neapolitana (strain ATCC 49049 / DSM 4359 / NBRC 107923 / NS-E).